Reading from the N-terminus, the 108-residue chain is Cytochrome c oxidase subunit 1 (108 aa).

A helical membrane pass occupies residues 10 to 30 (AFVAPVLGLLGFIPGGAGGIV). Heme a3 is bound at residue His-49. The next 2 helical transmembrane spans lie at 50-70 (FHLQVASLVTLTAMGSLYWLL) and 85-105 (LGLAVVWLWFLGMMIMAVGLH). Residue His-51 participates in Fe(II)-heme a binding.

The protein belongs to the heme-copper respiratory oxidase family. Heme serves as cofactor. The cofactor is Cu cation.

Its subcellular location is the cell membrane. It catalyses the reaction 4 Fe(II)-[cytochrome c] + O2 + 8 H(+)(in) = 4 Fe(III)-[cytochrome c] + 2 H2O + 4 H(+)(out). It participates in energy metabolism; oxidative phosphorylation. This Thermus thermophilus protein is Cytochrome c oxidase subunit 1 (cbaA).